The primary structure comprises 100 residues: MSKLFNSRLADVIRKPVITEKATNALDFNQYTFEVDHRAAKPQIKAAIEALFSVKVIGVNTMNPPRRTRRVGKFSGKRSQVKKAIVRLAEGDKIQLFPES.

This sequence belongs to the universal ribosomal protein uL23 family. As to quaternary structure, part of the 50S ribosomal subunit. Contacts protein L29, and trigger factor when it is bound to the ribosome.

In terms of biological role, one of the early assembly proteins it binds 23S rRNA. One of the proteins that surrounds the polypeptide exit tunnel on the outside of the ribosome. Forms the main docking site for trigger factor binding to the ribosome. The polypeptide is Large ribosomal subunit protein uL23 (Prochlorococcus marinus (strain MIT 9301)).